The following is a 515-amino-acid chain: MLAVDTGLVEEWLSEFKTLPEASISSYATNLKDKTALISSLYKVIQEPQSELLEPVCHQLFEFYRSGEEQLLRFTLQFLPELMWCYLAVSASRDLQSSGCIEALLLGVYNLEIVDKEGHSKVLSFTIPSLSKPSVYHEPSSIGSMALTEGALSQHGLSRVVYSGPHPQREMLTAQNRFEVLTFLLLCYNAALSYMPAISLQSLCQICSRICVCGYPRQQVRKYKGVNSRIPVSSEFMVQMLTGIYYAFYNGEWDLARKAMDDVLYRAQLELYPEPLLVANAIKASLPQGAMKSSKEGTKCIQVEITPTSSRISRNAVTSMSIRGHRWKRHGNADLGIEEELIEVSETDEGFYSRAASSTSQSALSNSSNTSSKNLLGKSQRRSGGSKAAGREKEGETCREHLSRKQTQRALSENLELVSLKRLTLTTSQSLPKPGSHSLARTTTTVFSKSFEQVSGVTVANNRGGVSGTEANRFSACSLQEEKLIYGTERTDLPVLSKQPNQQRPPSISITLSTD.

The segment covering 358–378 (STSQSALSNSSNTSSKNLLGK) has biased composition (low complexity). 2 disordered regions span residues 358 to 410 (STSQ…TQRA) and 491 to 515 (TDLPVLSKQPNQQRPPSISITLSTD). Basic and acidic residues predominate over residues 389 to 403 (AGREKEGETCREHLS). Polar residues predominate over residues 498 to 515 (KQPNQQRPPSISITLSTD).

It belongs to the Hyccin family. Component of a phosphatidylinositol 4-kinase (PI4K) complex.

Its subcellular location is the cytoplasm. The protein resides in the cytosol. The protein localises to the cell membrane. In terms of biological role, component of a complex required to localize phosphatidylinositol 4-kinase (PI4K) to the plasma membrane. The complex acts as a regulator of phosphatidylinositol 4-phosphate (PtdIns(4)P) synthesis. The protein is Hyccin (HYCC1) of Gallus gallus (Chicken).